We begin with the raw amino-acid sequence, 563 residues long: Arginine--tRNA ligase (563 aa).

The 'HIGH' region motif lies at Pro120–His130.

This sequence belongs to the class-I aminoacyl-tRNA synthetase family. As to quaternary structure, monomer.

The protein localises to the cytoplasm. It catalyses the reaction tRNA(Arg) + L-arginine + ATP = L-arginyl-tRNA(Arg) + AMP + diphosphate. The sequence is that of Arginine--tRNA ligase from Clostridium botulinum (strain Okra / Type B1).